The chain runs to 476 residues: Aspartyl/glutamyl-tRNA(Asn/Gln) amidotransferase subunit B (476 aa).

It belongs to the GatB/GatE family. GatB subfamily. Heterotrimer of A, B and C subunits.

It catalyses the reaction L-glutamyl-tRNA(Gln) + L-glutamine + ATP + H2O = L-glutaminyl-tRNA(Gln) + L-glutamate + ADP + phosphate + H(+). It carries out the reaction L-aspartyl-tRNA(Asn) + L-glutamine + ATP + H2O = L-asparaginyl-tRNA(Asn) + L-glutamate + ADP + phosphate + 2 H(+). Its function is as follows. Allows the formation of correctly charged Asn-tRNA(Asn) or Gln-tRNA(Gln) through the transamidation of misacylated Asp-tRNA(Asn) or Glu-tRNA(Gln) in organisms which lack either or both of asparaginyl-tRNA or glutaminyl-tRNA synthetases. The reaction takes place in the presence of glutamine and ATP through an activated phospho-Asp-tRNA(Asn) or phospho-Glu-tRNA(Gln). This chain is Aspartyl/glutamyl-tRNA(Asn/Gln) amidotransferase subunit B, found in Lactobacillus helveticus (strain DPC 4571).